A 1456-amino-acid chain; its full sequence is Macrophage mannose receptor 1 (1456 aa).

A signal peptide spans 1-19; the sequence is MRLLLLLAFISVIPVSVQL. Residues 20-1388 are Extracellular-facing; sequence LDARQFLIYN…DPQPKGSSKA (1369 aa). The 121-residue stretch at 22-142 folds into the Ricin B-type lectin domain; that stretch reads ARQFLIYNED…SGLWSRWKVY (121 aa). 7 disulfides stabilise this stretch: cysteine 35/cysteine 49, cysteine 74/cysteine 91, cysteine 102/cysteine 149, cysteine 168/cysteine 194, cysteine 182/cysteine 209, cysteine 247/cysteine 340, and cysteine 316/cysteine 332. N-linked (GlcNAc...) asparagine glycosylation is present at asparagine 104. Residues 163–211 enclose the Fibronectin type-II domain; sequence ANGAVCAFPFKFENKWYADCTSAGRSDGWLWCGTTTDYDKDKLFGFCPL. In terms of domain architecture, C-type lectin 1 spans 225 to 341; it reads LTGILYQINS…CVQKLGYICK (117 aa). An N-linked (GlcNAc...) asparagine glycan is attached at asparagine 344. C-type lectin domains follow at residues 369–487, 511–626, 655–778, and 807–923; these read YAGH…YICK, HGFY…FVCK, KTSM…WICQ, and YKDY…FICQ. Cystine bridges form between cysteine 391/cysteine 486 and cysteine 463/cysteine 478. Residue asparagine 529 is glycosylated (N-linked (GlcNAc...) asparagine). Disulfide bonds link cysteine 532-cysteine 625, cysteine 600-cysteine 617, cysteine 680-cysteine 777, cysteine 753-cysteine 769, cysteine 828-cysteine 922, and cysteine 899-cysteine 914. 2 N-linked (GlcNAc...) asparagine glycosylation sites follow: asparagine 926 and asparagine 930. 3 consecutive C-type lectin domains span residues 951–1079, 1101–1212, and 1240–1355; these read YKNK…YICQ, YGKS…FLCK, and FYGH…FICK. Intrachain disulfides connect cysteine 976–cysteine 1078, cysteine 1051–cysteine 1070, cysteine 1122–cysteine 1211, cysteine 1189–cysteine 1203, cysteine 1262–cysteine 1354, and cysteine 1331–cysteine 1346. A glycan (N-linked (GlcNAc...) asparagine) is linked at asparagine 1159. The N-linked (GlcNAc...) asparagine glycan is linked to asparagine 1204. The helical transmembrane segment at 1389-1409 threads the bilayer; it reads AGVVTVVLLIVIGAGVAAYFF. Topologically, residues 1410 to 1456 are cytoplasmic; the sequence is YKKRHALHIPQEATFENTLYFNSNLSPGTSDTKDLMGNIEQNEHAII.

Detected in macrophages.

Its subcellular location is the endosome membrane. The protein localises to the cell membrane. In terms of biological role, mediates the endocytosis of glycoproteins by macrophages. Binds both sulfated and non-sulfated polysaccharide chains. Acts as phagocytic receptor for bacteria, fungi and other pathogens. The chain is Macrophage mannose receptor 1 (Mrc1) from Mus musculus (Mouse).